The sequence spans 734 residues: Photosystem I P700 chlorophyll a apoprotein A2 (734 aa).

8 helical membrane passes run 46-69 (IFAS…FHVA), 135-158 (LYTG…LHLQ), 175-199 (LNHH…HVAI), 273-291 (IAHH…GHMY), 330-353 (IHFQ…QHMY), 369-395 (AALY…IFFI), 417-439 (AIIS…LYVH), and 517-535 (FLVH…LILV). Cys-559 and Cys-568 together coordinate [4Fe-4S] cluster. 2 helical membrane-spanning segments follow: residues 575-596 (AFYL…YWHW) and 643-665 (LSVW…MFLI). Residues His-654, Met-662, and Tyr-670 each contribute to the chlorophyll a site. Trp-671 provides a ligand contact to phylloquinone. A helical membrane pass occupies residues 707–727 (LVGLAHFSVGYIFTYAAFLIA).

This sequence belongs to the PsaA/PsaB family. In terms of assembly, the PsaA/B heterodimer binds the P700 chlorophyll special pair and subsequent electron acceptors. PSI consists of a core antenna complex that captures photons, and an electron transfer chain that converts photonic excitation into a charge separation. The eukaryotic PSI reaction center is composed of at least 11 subunits. Requires P700 is a chlorophyll a/chlorophyll a' dimer, A0 is one or more chlorophyll a, A1 is one or both phylloquinones and FX is a shared 4Fe-4S iron-sulfur center. as cofactor.

The protein localises to the plastid. Its subcellular location is the chloroplast thylakoid membrane. It carries out the reaction reduced [plastocyanin] + hnu + oxidized [2Fe-2S]-[ferredoxin] = oxidized [plastocyanin] + reduced [2Fe-2S]-[ferredoxin]. Its function is as follows. PsaA and PsaB bind P700, the primary electron donor of photosystem I (PSI), as well as the electron acceptors A0, A1 and FX. PSI is a plastocyanin-ferredoxin oxidoreductase, converting photonic excitation into a charge separation, which transfers an electron from the donor P700 chlorophyll pair to the spectroscopically characterized acceptors A0, A1, FX, FA and FB in turn. Oxidized P700 is reduced on the lumenal side of the thylakoid membrane by plastocyanin. This is Photosystem I P700 chlorophyll a apoprotein A2 from Gossypium hirsutum (Upland cotton).